The chain runs to 183 residues: uncharacterized protein (183 aa).

To A.muscaria DOPA 4,5-dioxygenase.

This is an uncharacterized protein from Botryotinia fuckeliana (Noble rot fungus).